Consider the following 154-residue polypeptide: Xanthine-guanine phosphoribosyltransferase (154 aa).

5-phospho-alpha-D-ribose 1-diphosphate-binding positions include 37 to 38, Arg69, and 88 to 96; these read RG and EDLVDSGDT. Arg69 contacts GMP. Residue Asp89 participates in Mg(2+) binding. 2 residues coordinate guanine: Asp92 and Ile135. Xanthine-binding residues include Asp92 and Ile135. GMP is bound by residues 92–96 and 134–135; these read DSGDT and WI.

Belongs to the purine/pyrimidine phosphoribosyltransferase family. XGPT subfamily. As to quaternary structure, homotetramer. Mg(2+) is required as a cofactor.

It localises to the cell inner membrane. It carries out the reaction GMP + diphosphate = guanine + 5-phospho-alpha-D-ribose 1-diphosphate. The enzyme catalyses XMP + diphosphate = xanthine + 5-phospho-alpha-D-ribose 1-diphosphate. The catalysed reaction is IMP + diphosphate = hypoxanthine + 5-phospho-alpha-D-ribose 1-diphosphate. It participates in purine metabolism; GMP biosynthesis via salvage pathway; GMP from guanine: step 1/1. It functions in the pathway purine metabolism; XMP biosynthesis via salvage pathway; XMP from xanthine: step 1/1. In terms of biological role, purine salvage pathway enzyme that catalyzes the transfer of the ribosyl-5-phosphate group from 5-phospho-alpha-D-ribose 1-diphosphate (PRPP) to the N9 position of the 6-oxopurines guanine and xanthine to form the corresponding ribonucleotides GMP (guanosine 5'-monophosphate) and XMP (xanthosine 5'-monophosphate), with the release of PPi. To a lesser extent, also acts on hypoxanthine. This Vibrio atlanticus (strain LGP32) (Vibrio splendidus (strain Mel32)) protein is Xanthine-guanine phosphoribosyltransferase.